The sequence spans 542 residues: MAMNVSTTIGLLNATSFASSSSINTVKILFVTLFISIVSTIVKLQKSAANKEGSKKLPLPPGPTPWPLIGNIPEMIRYRPTFRWIHQLMKDMNTDICLIRFGRTNFVPISCPVLAREILKKNDAIFSNRPKTLSAKSMSGGYLTTIVVPYNDQWKKMRKILTSEIISPARHKWLHDKRAEEADNLVFYIHNQFKANKNVNLRTATRHYGGNVIRKMVFSKRYFGKGMPDGGPGPEEIEHIDAVFTALKYLYGFCISDFLPFLLGLDLDGQEKFVLDANKTIRDYQNPLIDERIQQWKSGERKEMEDLLDVFITLKDSDGNPLLTPDEIKNQIAEIMIATVDNPSNAIEWAMGEMLNQPEILKKATEELDRVVGKDRLVQESDIPNLDYVKACAREAFRLHPVAHFNVPHVAMEDTVIGDYFIPKGSWAVLSRYGLGRNPKTWSDPLKYDPERHMNEGEVVLTEHELRFVTFSTGRRGCVASLLGSCMTTMLLARMLQCFTWTPPANVSKIDLAETLDELTPATPISAFAKPRLAPHLYPTSP.

The Cytoplasmic portion of the chain corresponds to 1 to 21; the sequence is MAMNVSTTIGLLNATSFASSS. The helical; Signal-anchor for type II membrane protein transmembrane segment at 22–42 threads the bilayer; sequence SINTVKILFVTLFISIVSTIV. Residues 43-542 lie on the Lumenal side of the membrane; sequence KLQKSAANKE…LAPHLYPTSP (500 aa). An N-linked (GlcNAc...) asparagine glycan is attached at asparagine 278. Cysteine 478 is a binding site for heme. An N-linked (GlcNAc...) asparagine glycan is attached at asparagine 506.

It belongs to the cytochrome P450 family. Requires heme as cofactor. As to expression, expressed in the epidermis, the next two cortex cell layers, the endodermis and the pericycle of leaf petioles. Strong expression around the laticifers among the phloem cells and in parenchymatic cells between the protoxylem and the metaxylem cells. In the leaves, preferentially expressed in the mesophyll cells adjacent to the epidermis.

It is found in the microsome membrane. The catalysed reaction is L-valine + 2 reduced [NADPH--hemoprotein reductase] + 2 O2 = (E)-2-methylpropanal oxime + 2 oxidized [NADPH--hemoprotein reductase] + CO2 + 3 H2O + 2 H(+). It catalyses the reaction L-valine + reduced [NADPH--hemoprotein reductase] + O2 = N-hydroxy-L-valine + oxidized [NADPH--hemoprotein reductase] + H2O + 2 H(+). The enzyme catalyses N-hydroxy-L-valine + reduced [NADPH--hemoprotein reductase] + O2 = N,N-dihydroxy-L-valine + oxidized [NADPH--hemoprotein reductase] + H2O + H(+). It carries out the reaction L-isoleucine + 2 reduced [NADPH--hemoprotein reductase] + 2 O2 = (1E,2S)-2-methylbutanal oxime + 2 oxidized [NADPH--hemoprotein reductase] + CO2 + 3 H2O + 2 H(+). The catalysed reaction is L-isoleucine + reduced [NADPH--hemoprotein reductase] + O2 = N-hydroxy-L-isoleucine + oxidized [NADPH--hemoprotein reductase] + H2O + 2 H(+). It catalyses the reaction N-hydroxy-L-isoleucine + reduced [NADPH--hemoprotein reductase] + O2 = N,N-dihydroxy-L-isoleucine + oxidized [NADPH--hemoprotein reductase] + H2O + H(+). The protein operates within secondary metabolite biosynthesis. Its activity is regulated as follows. Inhibited by tetcyclasis but not by 1-aminobenzotriazole (ABT). Involved in the biosynthesis of the cyanogenic glucosides linamarin and lotaustralin. Can use L-valine or L-isoleucine as substrate, but not L-leucine, L-phenylalanine, L-tyrosine, D-valine or D-isoleucine. Catalyzes multi-step reactions starting with two successive N-hydroxylations using L-valine and L-isoleucine as substrates leading to the formation of N,N-dihydroxy-L-valine and N,N-dihydroxy-L-isoleucine, respectively; following spontaneous reactions lead to the production of (E)-2-methylpropanal oxime and (1E,2S)-2-methylbutanal oxime, respectively. This chain is Valine N-monooxygenase 1, found in Manihot esculenta (Cassava).